The sequence spans 215 residues: S-crystallin 4 (215 aa).

The 79-residue stretch at 2-80 (PSYTLHYFNH…YLAREFGFHG (79 aa)) folds into the GST N-terminal domain. The region spanning 82-215 (NNMDMARVDY…YLQKRSRTEF (134 aa)) is the GST C-terminal domain.

It belongs to the GST superfamily. In terms of tissue distribution, lens.

Its function is as follows. S-crystallins are structural components of squids and octopi eye lens. Contains relatively little if any GST activity. The chain is S-crystallin 4 from Enteroctopus dofleini (North Pacific giant octopus).